Consider the following 260-residue polypeptide: tRNA pseudouridine synthase C (260 aa).

Residue Asp-54 is part of the active site.

The protein belongs to the pseudouridine synthase RluA family.

It carries out the reaction uridine(65) in tRNA = pseudouridine(65) in tRNA. In terms of biological role, responsible for synthesis of pseudouridine from uracil-65 in transfer RNAs. The protein is tRNA pseudouridine synthase C (truC) of Escherichia coli O6:H1 (strain CFT073 / ATCC 700928 / UPEC).